A 664-amino-acid chain; its full sequence is DNA ligase (664 aa).

NAD(+) contacts are provided by residues 30-34 (DFEFD), 79-80 (SL), and E109. K111 functions as the N6-AMP-lysine intermediate in the catalytic mechanism. Residues R132, E169, K284, and K308 each coordinate NAD(+). 4 residues coordinate Zn(2+): C403, C406, C421, and C427. Residues 586–664 (NRSEKLKGLT…NEDAFLNMLE (79 aa)) enclose the BRCT domain.

This sequence belongs to the NAD-dependent DNA ligase family. LigA subfamily. Mg(2+) serves as cofactor. Mn(2+) is required as a cofactor.

The catalysed reaction is NAD(+) + (deoxyribonucleotide)n-3'-hydroxyl + 5'-phospho-(deoxyribonucleotide)m = (deoxyribonucleotide)n+m + AMP + beta-nicotinamide D-nucleotide.. Functionally, DNA ligase that catalyzes the formation of phosphodiester linkages between 5'-phosphoryl and 3'-hydroxyl groups in double-stranded DNA using NAD as a coenzyme and as the energy source for the reaction. It is essential for DNA replication and repair of damaged DNA. The polypeptide is DNA ligase (Parabacteroides distasonis (strain ATCC 8503 / DSM 20701 / CIP 104284 / JCM 5825 / NCTC 11152)).